We begin with the raw amino-acid sequence, 667 residues long: Primary amine oxidase (667 aa).

The N-terminal stretch at 1–18 (KFALFSVLTLLSFHAVFS) is a signal peptide. Residue N149 is glycosylated (N-linked (GlcNAc...) asparagine). C155 and C176 are joined by a disulfide. The segment at 216 to 246 (PTAENTEYQVSKQSPPFGPKQHSLTSHQPQG) is disordered. Over residues 218–229 (AENTEYQVSKQS) the composition is skewed to polar residues. N-linked (GlcNAc...) asparagine glycosylation is present at N252. Position 316-327 (316-327 (FFDSGEFGFGLS)) interacts with substrate. D318 (proton acceptor) is an active-site residue. C337 and C363 are joined by a disulfide. N382 carries an N-linked (GlcNAc...) asparagine glycan. 402 to 407 (VGNYDN) contacts substrate. Residue Y405 is the Schiff-base intermediate with substrate; via topaquinone of the active site. Position 405 is a 2',4',5'-topaquinone (Y405). Residues H460 and H462 each contribute to the Cu cation site. The Mn(2+) site is built by D469, F470, and D471. An N-linked (GlcNAc...) asparagine glycan is attached at N576. Mn(2+) is bound by residues D610 and I611. H621 contributes to the Cu cation binding site.

The protein belongs to the copper/topaquinone oxidase family. Homodimer. It depends on Cu cation as a cofactor. Zn(2+) is required as a cofactor. Requires L-topaquinone as cofactor. The cofactor is Mn(2+). Post-translationally, glycosylated; contains two carbohydrate chains per monomer. In terms of processing, topaquinone (TPQ) is generated by copper-dependent autoxidation of a specific tyrosyl residue.

It catalyses the reaction a primary methyl amine + O2 + H2O = an aldehyde + H2O2 + NH4(+). The protein is Primary amine oxidase of Lens culinaris (Lentil).